Reading from the N-terminus, the 186-residue chain is Ribosome maturation factor RimP (186 aa).

This sequence belongs to the RimP family.

The protein resides in the cytoplasm. Required for maturation of 30S ribosomal subunits. This chain is Ribosome maturation factor RimP, found in Novosphingobium aromaticivorans (strain ATCC 700278 / DSM 12444 / CCUG 56034 / CIP 105152 / NBRC 16084 / F199).